The following is a 346-amino-acid chain: Biotin synthase (346 aa).

The Radical SAM core domain occupies 38–256; sequence RQVQVSTLLS…IAVARIMMPT (219 aa). 3 residues coordinate [4Fe-4S] cluster: cysteine 53, cysteine 57, and cysteine 60. Cysteine 97, cysteine 128, cysteine 188, and arginine 260 together coordinate [2Fe-2S] cluster.

Belongs to the radical SAM superfamily. Biotin synthase family. As to quaternary structure, homodimer. It depends on [4Fe-4S] cluster as a cofactor. The cofactor is [2Fe-2S] cluster.

It carries out the reaction (4R,5S)-dethiobiotin + (sulfur carrier)-SH + 2 reduced [2Fe-2S]-[ferredoxin] + 2 S-adenosyl-L-methionine = (sulfur carrier)-H + biotin + 2 5'-deoxyadenosine + 2 L-methionine + 2 oxidized [2Fe-2S]-[ferredoxin]. Its pathway is cofactor biosynthesis; biotin biosynthesis; biotin from 7,8-diaminononanoate: step 2/2. Catalyzes the conversion of dethiobiotin (DTB) to biotin by the insertion of a sulfur atom into dethiobiotin via a radical-based mechanism. The chain is Biotin synthase from Shigella flexneri serotype 5b (strain 8401).